A 678-amino-acid polypeptide reads, in one-letter code: DNA ligase (678 aa).

NAD(+) is bound by residues 36–40 (DVVYD), 85–86 (SL), and glutamate 117. Lysine 119 serves as the catalytic N6-AMP-lysine intermediate. Residues arginine 140, glutamate 177, lysine 294, and lysine 318 each contribute to the NAD(+) site. Zn(2+) contacts are provided by cysteine 412, cysteine 415, cysteine 430, and cysteine 435. The region spanning 598 to 678 (ISSTPLAGKT…QLLKMINPQE (81 aa)) is the BRCT domain.

The protein belongs to the NAD-dependent DNA ligase family. LigA subfamily. Mg(2+) serves as cofactor. Mn(2+) is required as a cofactor.

The enzyme catalyses NAD(+) + (deoxyribonucleotide)n-3'-hydroxyl + 5'-phospho-(deoxyribonucleotide)m = (deoxyribonucleotide)n+m + AMP + beta-nicotinamide D-nucleotide.. Functionally, DNA ligase that catalyzes the formation of phosphodiester linkages between 5'-phosphoryl and 3'-hydroxyl groups in double-stranded DNA using NAD as a coenzyme and as the energy source for the reaction. It is essential for DNA replication and repair of damaged DNA. The protein is DNA ligase of Gloeothece citriformis (strain PCC 7424) (Cyanothece sp. (strain PCC 7424)).